Consider the following 224-residue polypeptide: UPF0758 protein LCA_0852 (224 aa).

An MPN domain is found at 100 to 222 (VVASSQMVGQ…YLSLREEGYL (123 aa)). The Zn(2+) site is built by H171, H173, and D184. Positions 171-184 (HNHPSGQLAPSTQD) match the JAMM motif motif.

It belongs to the UPF0758 family.

The chain is UPF0758 protein LCA_0852 from Latilactobacillus sakei subsp. sakei (strain 23K) (Lactobacillus sakei subsp. sakei).